A 425-amino-acid polypeptide reads, in one-letter code: Mothers against decapentaplegic homolog 3 (425 aa).

Ser-2 bears the N-acetylserine mark. The residue at position 8 (Thr-8) is a Phosphothreonine; by CDK2 and CDK4. Residues Pro-10–Pro-136 enclose the MH1 domain. Residue Lys-33 forms a Glycyl lysine isopeptide (Lys-Gly) (interchain with G-Cter in ubiquitin) linkage. Residue Cys-64 coordinates Zn(2+). A Glycyl lysine isopeptide (Lys-Gly) (interchain with G-Cter in ubiquitin) cross-link involves residue Lys-81. Zn(2+)-binding residues include Cys-109, Cys-121, and His-126. The segment at Pro-137–Phe-231 is linker. The segment covering Asn-165–Pro-177 has biased composition (polar residues). Positions Asn-165–Ser-208 are disordered. The residue at position 179 (Thr-179) is a Phosphothreonine; by CDK2, CDK4 and MAPK. Ser-204 carries the post-translational modification Phosphoserine; by GSK3 and MAPK. Position 208 is a phosphoserine; by MAPK (Ser-208). The residue at position 213 (Ser-213) is a Phosphoserine; by CDK2 and CDK4. The 194-residue stretch at Trp-232 to Ser-425 folds into the MH2 domain. The segment at Leu-271–Tyr-324 is sufficient for interaction with XPO4. Lys-378 is subject to N6-acetyllysine. Ser-416 bears the Phosphoserine mark. Ser-418 is modified (phosphoserine; by CK1). 3 positions are modified to phosphoserine; by TGFBR1: Ser-422, Ser-423, and Ser-425.

The protein belongs to the dwarfin/SMAD family. Monomer; in the absence of TGF-beta. Homooligomer; in the presence of TGF-beta. Heterotrimer; forms a heterotrimer in the presence of TGF-beta consisting of two molecules of C-terminally phosphorylated SMAD2 or SMAD3 and one of SMAD4 to form the transcriptionally active SMAD2/SMAD3-SMAD4 complex. Part of a complex consisting of MAGI2/ARIP1, ACVR2A, ACVR1B and SMAD3. Forms a complex with SMAD2 and TRIM33 upon addition of TGF-beta. Found in a complex composed of SMAD3, RAN and XPO4; within the complex interacts directly with XPO4. Component of the multimeric complex SMAD3/SMAD4/JUN/FOS which forms at the AP1 promoter site; required for synergistic transcriptional activity in response to TGF-beta. Part of a ternary complex composed of SMAD3, ITCH/AIP4 and NEDD9/HEF1; within the complex NEDD9/HEF1 interacts (via N-terminus) with ITCH/AIP4; the complex mediates ubiquitination and proteasomal degradation of NEDD9/HEF1. Interacts with NEDD9; the interaction promotes NEDD9 ubiquitination and proteasomal degradation. Interacts (via an N-terminal domain) with JUN (via its basic DNA binding and leucine zipper domains); this interaction is essential for DNA binding and cooperative transcriptional activity in response to TGF-beta. Identified in a complex that contains at least ZNF451, SMAD2, SMAD3 and SMAD4. Interacts with PPM1A; the interaction dephosphorylates SMAD3 in the C-terminal SXS motif leading to disruption of the SMAD2/3-SMAD4 complex, nuclear export and termination of TGF-beta signaling. Interacts (via MH2 domain) with ZMIZ1 (via SP-RING-type domain); in the TGF-beta signaling pathway increases the activity of the SMAD3/SMAD4 transcriptional complex. Interacts (when phosphorylated) with RNF111; RNF111 acts as an enhancer of the transcriptional responses by mediating ubiquitination and degradation of SMAD3 inhibitors. Interacts (dephosphorylated form via the MH1 and MH2 domains) with RANBP3 (via its C-terminal R domain); the interaction results in the export of dephosphorylated SMAD3 out of the nucleus and termination of the TGF-beta signaling. Interacts (via MH2 domain) with LEMD3; the interaction represses SMAD3 transcriptional activity through preventing the formation of the heteromeric complex with SMAD4 and translocation to the nucleus. Interacts (via the linker region) with EP300 (C-terminal); the interaction promotes SMAD3 acetylation and is enhanced by TGF-beta phosphorylation in the C-terminal of SMAD3. This interaction can be blocked by competitive binding of adenovirus oncoprotein E1A to the same C-terminal site on EP300, which then results in partially inhibited SMAD3/SMAD4 transcriptional activity. Interacts with TGFBR1. Interacts with TGFB1I1. Interacts with PRDM16. Interacts with SNW1. Interacts (via MH2 domain) with ZFYVE9. Interacts with HDAC1. Interacts with TGIF2. Interacts with SKOR1. Interacts with SKOR2. Interacts with DACH1; the interaction inhibits the TGF-beta signaling. Interacts with RBPMS. Interacts (via MH2 domain) with MECOM. Interacts with WWTR1 (via its coiled-coil domain). Interacts with SKI; the interaction represses SMAD3 transcriptional activity. Interacts with MEN1. Interacts with IL1F7. Interaction with CSNK1G2. Interacts with PDPK1 (via PH domain). Interacts with DAB2; the interactions are enhanced upon TGF-beta stimulation. Interacts with USP15. Interacts with PPP5C; the interaction decreases SMAD3 phosphorylation and protein levels. Interacts with LDLRAD4 (via the SMAD interaction motif). Interacts with PMEPA1. Interacts with ZNF451. Interacts with ZFHX3. Interacts weakly with ZNF8. Interacts with STUB1, HSPA1A, HSPA1B, HSP90AA1 and HSP90AB1. Interacts with YAP1 (when phosphorylated at 'Ser-55'). Interacts with MAGI2/ARIP1. Interacts (via MH2 domain) with CITED2 (via C-terminus). Interacts with HGS. Interacts with WWP1. Interacts with TTRAP. Interacts with FOXL2. Interacts with PML. Interacts with NEDD4L; the interaction requires TGF-beta stimulation. Interacts with ZC3H3. Interacts with TGIF. Interacts with CREBBP. Interacts with ATF2. Interacts with NEDD9; the interaction is inhibited by oxidation of NEDD9. Interacts with MTMR4; negatively regulates TGF-beta signaling through SMAD3 dephosphorylation and retention in endosomes. Phosphorylated on serine and threonine residues. Enhanced phosphorylation in the linker region on Thr-179, Ser-204 and Ser-208 on EGF and TGF-beta treatment. Ser-208 is the main site of MAPK-mediated phosphorylation. CDK-mediated phosphorylation occurs in a cell-cycle dependent manner and inhibits both the transcriptional activity and antiproliferative functions of SMAD3. This phosphorylation is inhibited by flavopiridol. Maximum phosphorylation at the G(1)/S junction. Also phosphorylated on serine residues in the C-terminal SXS motif by TGFBR1 and ACVR1. TGFBR1-mediated phosphorylation at these C-terminal sites is required for interaction with SMAD4, nuclear location and transactivational activity, and appears to be a prerequisite for the TGF-beta mediated phosphorylation in the linker region. Dephosphorylated in the C-terminal SXS motif by PPM1A. This dephosphorylation disrupts the interaction with SMAD4, promotes nuclear export and terminates TGF-beta-mediated signaling. Phosphorylation at Ser-418 by CSNK1G2/CK1 promotes ligand-dependent ubiquitination and subsequent proteasome degradation, thus inhibiting SMAD3-mediated TGF-beta responses. Phosphorylated by PDPK1. Post-translationally, acetylation in the nucleus by EP300 in the MH2 domain regulates positively its transcriptional activity and is enhanced by TGF-beta. In terms of processing, poly-ADP-ribosylated by PARP1 and PARP2. ADP-ribosylation negatively regulates SMAD3 transcriptional responses during the course of TGF-beta signaling. Ubiquitinated. Monoubiquitinated, leading to prevent DNA-binding. Deubiquitination by USP15 alleviates inhibition and promotes activation of TGF-beta target genes. Ubiquitinated by RNF111, leading to its degradation: only SMAD3 proteins that are 'in use' are targeted by RNF111, RNF111 playing a key role in activating SMAD3 and regulating its turnover. Undergoes STUB1-mediated ubiquitination and degradation. As to expression, highly expressed in the brain and ovary. Detected in the pyramidal cells of the hippocampus, granule cells of the dentate gyrus, granular cells of the cerebral cortex and the granulosa cells of the ovary.

It is found in the cytoplasm. It localises to the nucleus. Functionally, receptor-regulated SMAD (R-SMAD) that is an intracellular signal transducer and transcriptional modulator activated by TGF-beta (transforming growth factor) and activin type 1 receptor kinases. Binds the TRE element in the promoter region of many genes that are regulated by TGF-beta and, on formation of the SMAD3/SMAD4 complex, activates transcription. Also can form a SMAD3/SMAD4/JUN/FOS complex at the AP-1/SMAD site to regulate TGF-beta-mediated transcription. Has an inhibitory effect on wound healing probably by modulating both growth and migration of primary keratinocytes and by altering the TGF-mediated chemotaxis of monocytes. This effect on wound healing appears to be hormone-sensitive. Regulator of chondrogenesis and osteogenesis and inhibits early healing of bone fractures. Positively regulates PDPK1 kinase activity by stimulating its dissociation from the 14-3-3 protein YWHAQ which acts as a negative regulator. In Sus scrofa (Pig), this protein is Mothers against decapentaplegic homolog 3 (SMAD3).